The primary structure comprises 1204 residues: Cingulin (1204 aa).

Residues 7–359 form a head region; the sequence is MAEPRGPVDH…VMMSSGSSKA (353 aa). The interval 25–48 is disordered; sequence EPVSGAEMGTLRRGGRRPAKDARA. Positions 48-62 match the ZIM motif; sequence ASTYGVAVRVQGIAG. The tract at residues 54 to 67 is interaction with TJP1/ZO1; that stretch reads AVRVQGIAGQPFVV. Residues 68-269 form a disordered region; it reads LNSGEKGGDS…SPLSGLSRAR (202 aa). S95, S96, S98, S135, S137, S140, S155, and S165 each carry phosphoserine. Residues 126 to 140 are compositionally biased toward polar residues; that stretch reads TQWNGKLLRSQSQAS. Over residues 166–190 the composition is skewed to polar residues; it reads PGSTIDTAPLSSVDSLINKFDSQLR. Over residues 207–231 the composition is skewed to basic and acidic residues; that stretch reads EQRKRSKSLDSRLPRDTLEERERQS. A phosphoserine mark is found at S214, S217, S260, S278, S340, and S353. Positions 360 to 1161 form a coiled coil; the sequence is VAGQGELTRK…SLEKDSWRKA (802 aa). K581 bears the N6-acetyllysine mark. The interval 1156–1182 is disordered; sequence DSWRKASRSAAESTLKHEGLSSDEEFD. Residues 1162–1204 form a tail region; that stretch reads SRSAAESTLKHEGLSSDEEFDGVYDPSSIASLLTESNLQTSSC. S1176 and S1177 each carry phosphoserine.

It belongs to the cingulin family. As to quaternary structure, homodimer. Interacts with TJP1/ZO1 and SPEF1.

It localises to the cell junction. Its subcellular location is the tight junction. Its function is as follows. Probably plays a role in the formation and regulation of the tight junction (TJ) paracellular permeability barrier. This chain is Cingulin, found in Callithrix jacchus (White-tufted-ear marmoset).